A 1068-amino-acid polypeptide reads, in one-letter code: Carbamoyl phosphate synthase large chain (1068 aa).

Positions 1-401 (MPRRTDLHRI…SLLKAVRSLE (401 aa)) are carboxyphosphate synthetic domain. Residues Arg129, Arg169, Gly175, Gly176, Gln208, Ile210, Glu215, Gly241, Val242, His243, Gln284, and Glu298 each contribute to the ATP site. An ATP-grasp 1 domain is found at 133-327 (KQLMDELGQP…IAKIAAKIAV (195 aa)). The Mg(2+) site is built by Gln284, Glu298, and Asn300. Mn(2+) contacts are provided by Gln284, Glu298, and Asn300. Positions 402-546 (IGVDHLALRE…YSTYEMENES (145 aa)) are oligomerization domain. The carbamoyl phosphate synthetic domain stretch occupies residues 547-935 (KKSQRPSVLV…ALYKVFEAAN (389 aa)). Residues 671 to 867 (ESLLAELGIP…MAEVATRIIL (197 aa)) form the ATP-grasp 2 domain. Residues Arg707, Arg746, Leu748, Glu752, Gly777, Val778, His779, Ser780, Gln820, and Glu838 each contribute to the ATP site. Residues Gln820, Glu838, and Asn840 each coordinate Mg(2+). Mn(2+) contacts are provided by Gln820, Glu838, and Asn840. The MGS-like domain occupies 936–1068 (LHVPEYGKIL…ESRVFSTESI (133 aa)). An allosteric domain region spans residues 936–1068 (LHVPEYGKIL…ESRVFSTESI (133 aa)).

The protein belongs to the CarB family. In terms of assembly, composed of two chains; the small (or glutamine) chain promotes the hydrolysis of glutamine to ammonia, which is used by the large (or ammonia) chain to synthesize carbamoyl phosphate. Tetramer of heterodimers (alpha,beta)4. The cofactor is Mg(2+). It depends on Mn(2+) as a cofactor.

It catalyses the reaction hydrogencarbonate + L-glutamine + 2 ATP + H2O = carbamoyl phosphate + L-glutamate + 2 ADP + phosphate + 2 H(+). The catalysed reaction is hydrogencarbonate + NH4(+) + 2 ATP = carbamoyl phosphate + 2 ADP + phosphate + 2 H(+). Its pathway is amino-acid biosynthesis; L-arginine biosynthesis; carbamoyl phosphate from bicarbonate: step 1/1. It participates in pyrimidine metabolism; UMP biosynthesis via de novo pathway; (S)-dihydroorotate from bicarbonate: step 1/3. Functionally, large subunit of the glutamine-dependent carbamoyl phosphate synthetase (CPSase). CPSase catalyzes the formation of carbamoyl phosphate from the ammonia moiety of glutamine, carbonate, and phosphate donated by ATP, constituting the first step of 2 biosynthetic pathways, one leading to arginine and/or urea and the other to pyrimidine nucleotides. The large subunit (synthetase) binds the substrates ammonia (free or transferred from glutamine from the small subunit), hydrogencarbonate and ATP and carries out an ATP-coupled ligase reaction, activating hydrogencarbonate by forming carboxy phosphate which reacts with ammonia to form carbamoyl phosphate. The polypeptide is Carbamoyl phosphate synthase large chain (Cutibacterium acnes (strain DSM 16379 / KPA171202) (Propionibacterium acnes)).